The primary structure comprises 548 residues: MAAKEVKFGDSARKKMLVGVNVLADAVKATLGPKGRNVVLAKSFGAPTITKDGVSVAKEIELKDAFENMGAQLVKDVASKANDAAGDGTTTATVLAQAIVNEGLKSVAAGMNPMDLKRGIDKATSAIVAQLKDLAKPCADSKAIAQVGTISANSDNSIGDIIAEAMDKVGKEGVITVEEGSGLENELSVVEGMQFDRGYLSPYFINKPDTMVAELEGPLLLLVDKKISNIRELLPVLEAVAKAGRPLLIVAEDVEGEALATLVVNNMRGIVKVAAVKAPGFGDRRKAMLQDIAILTGGTVISEEVGLSLESATLEHLGNAKRVVLNKDNTTIIDGAGAQADIEARVAQIRKQVEETSSDYDKEKLQERLAKLAGGVAVIKVGAATEVEMKEKKARVEDALHATRAAVEEGVVPGGGVALVRALQAIEGLKGDNEDQNVGIALLRRAVEAPLRQIVANAGGEPSVVVDKVKQGSGNFGFNAATDTYGDMIEMGILDPAKVTRSALQAAASIGGLMITTEAMVAEAADDKAPAMPDMGGMGGMGGMGGMM.

ATP is bound by residues 30 to 33 (TLGP), K51, 87 to 91 (DGTTT), G415, 479 to 481 (NAA), and D495.

This sequence belongs to the chaperonin (HSP60) family. Forms a cylinder of 14 subunits composed of two heptameric rings stacked back-to-back. Interacts with the co-chaperonin GroES.

The protein localises to the cytoplasm. The enzyme catalyses ATP + H2O + a folded polypeptide = ADP + phosphate + an unfolded polypeptide.. Functionally, together with its co-chaperonin GroES, plays an essential role in assisting protein folding. The GroEL-GroES system forms a nano-cage that allows encapsulation of the non-native substrate proteins and provides a physical environment optimized to promote and accelerate protein folding. This is Chaperonin GroEL from Ectopseudomonas mendocina (strain ymp) (Pseudomonas mendocina).